The sequence spans 265 residues: Hydroxyethylthiazole kinase (265 aa).

Methionine 44 serves as a coordination point for substrate. The ATP site is built by lysine 120 and serine 166. Glycine 193 lines the substrate pocket.

Belongs to the Thz kinase family. It depends on Mg(2+) as a cofactor.

It carries out the reaction 5-(2-hydroxyethyl)-4-methylthiazole + ATP = 4-methyl-5-(2-phosphooxyethyl)-thiazole + ADP + H(+). It functions in the pathway cofactor biosynthesis; thiamine diphosphate biosynthesis; 4-methyl-5-(2-phosphoethyl)-thiazole from 5-(2-hydroxyethyl)-4-methylthiazole: step 1/1. Its function is as follows. Catalyzes the phosphorylation of the hydroxyl group of 4-methyl-5-beta-hydroxyethylthiazole (THZ). The protein is Hydroxyethylthiazole kinase of Methanosphaerula palustris (strain ATCC BAA-1556 / DSM 19958 / E1-9c).